We begin with the raw amino-acid sequence, 67 residues long: Small ribosomal subunit protein eS31 (67 aa).

C35, C38, C54, and C57 together coordinate Zn(2+). Residues 35 to 57 (CPRCGSIMAHHMKPLERWACGKC) form a C4-type zinc finger.

Belongs to the eukaryotic ribosomal protein eS31 family. As to quaternary structure, part of the 30S ribosomal subunit. Requires Zn(2+) as cofactor.

The chain is Small ribosomal subunit protein eS31 from Sulfolobus acidocaldarius (strain ATCC 33909 / DSM 639 / JCM 8929 / NBRC 15157 / NCIMB 11770).